Consider the following 503-residue polypeptide: Diels-Alderase cghA (503 aa).

Belongs to the Diels-Alderase family.

It carries out the reaction (2S)-3-[(2S)-3,5-dioxo-4-[(2E,4R,6R,8E,10E,12E)-4,6,12-trimethyltetradeca-2,8,10,12-tetraenoyl]pyrrolidin-2-yl]-2-hydroxy-2-methylpropanoate = sch 210972. The protein operates within secondary metabolite biosynthesis. Its function is as follows. Diels-Alderase; part of the gene cluster that mediates the biosynthesis of the tetramic acid Sch210972, a potential anti-HIV fungal natural product that contains a decalin core. The PKS module of cghG together with the enoylreductase cghC catalyze the formation of the polyketide unit which is then conjugated to 4-hydroxyl-4-methyl glutamate (HMG) by the condensation domain of the cghG NRPS module. One unique structural feature of Sch210972 is the tetramic acid motif proposed to be derived from the non-proteinogenic amino acid HMG, by a Dieckmann-type condensation catalyzed by the reductase domain of cghG. The aldolase cghB catalyzes the aldol condensation of 2 molecules of pyruvic acid to yield the intermediate 4-hydroxyl-4-methyl-2-oxoglutarate (HMOG), which can then be stereoselectively transaminated by an unidentified enzyme to form HMG. The Diels-Alderase cghA then uses the Dieckmann product released by cghG as substrate and catalyzes the Diels-Alder cycloaddition to form the decalin ring of Sch210972. CghA also suppresses the nonenzymatic formation of the alternative stereoisomer. This is Diels-Alderase cghA from Chaetomium globosum (strain ATCC 6205 / CBS 148.51 / DSM 1962 / NBRC 6347 / NRRL 1970) (Soil fungus).